The sequence spans 193 residues: dCTP deaminase (193 aa).

Residues 110–115 (RSSLAR), aspartate 128, 136–138 (VLE), tyrosine 171, lysine 178, and glutamine 182 each bind dCTP. Catalysis depends on glutamate 138, which acts as the Proton donor/acceptor. The tract at residues 169–193 (RPYNRRQDAKYRDQQGAVASRIDKD) is disordered.

It belongs to the dCTP deaminase family. Homotrimer.

It carries out the reaction dCTP + H2O + H(+) = dUTP + NH4(+). Its pathway is pyrimidine metabolism; dUMP biosynthesis; dUMP from dCTP (dUTP route): step 1/2. Catalyzes the deamination of dCTP to dUTP. The protein is dCTP deaminase of Salmonella paratyphi B (strain ATCC BAA-1250 / SPB7).